The sequence spans 197 residues: Glycerol-3-phosphate acyltransferase (197 aa).

The next 5 membrane-spanning stretches (helical) occupy residues 5-25, 54-74, 80-100, 112-132, and 153-173; these read IYIAALLLGYLFGSIPFGLIL, GLAAATLLLDALKGTAAVIIA, AEAAMLAALGAFLGHLFPVWL, IGVLIGLFWPGAIVFCLLWLA, and IFLWWFGHPALASLFAVLTLL.

It belongs to the PlsY family. In terms of assembly, probably interacts with PlsX.

Its subcellular location is the cell inner membrane. The enzyme catalyses an acyl phosphate + sn-glycerol 3-phosphate = a 1-acyl-sn-glycero-3-phosphate + phosphate. It functions in the pathway lipid metabolism; phospholipid metabolism. Functionally, catalyzes the transfer of an acyl group from acyl-phosphate (acyl-PO(4)) to glycerol-3-phosphate (G3P) to form lysophosphatidic acid (LPA). This enzyme utilizes acyl-phosphate as fatty acyl donor, but not acyl-CoA or acyl-ACP. The sequence is that of Glycerol-3-phosphate acyltransferase from Rhodopseudomonas palustris (strain HaA2).